We begin with the raw amino-acid sequence, 149 residues long: Protein K7 (149 aa).

Belongs to the orthopoxvirus OPG044 family. As to quaternary structure, interacts with DDX3; this interaction inhibits DDX3 and suppresses DDX3-mediated IFN-beta promoter induction. Interacts with TRAF6 and IRAK2; these interactions suppress TLR-dependent NF-KappaB activation.

It is found in the host cytoplasm. Virulence factor that affects the acute immune response to infection. Bcl-2-like protein which, through its interaction with the DEAD box RNA helicase DDX3X/DDX3, prevents TBK1/IKKepsilon-mediated IRF3 activation. Contributes to virulence by binding to the host TRAF6 and IRAK2 and preventing host NF-kappa-B activation. The protein is Protein K7 (OPG044) of Cynomys gunnisoni (Gunnison's prairie dog).